Reading from the N-terminus, the 589-residue chain is TAF5-like RNA polymerase II p300/CBP-associated factor-associated factor 65 kDa subunit 5L (589 aa).

WD repeat units follow at residues Asn-266–Glu-305, Gly-340–Leu-379, Gly-382–Ile-421, Gly-424–Leu-463, Gly-466–Glu-505, and Gly-508–Pro-547.

This sequence belongs to the WD repeat TAF5 family. In terms of assembly, the PCAF complex is composed of a number of TBP-associated factors (TAFS), such as TAF5, TAF5L, TAF6, TAF6L, TAF9, TAF10 and TAF12, PCAF, and also PCAF-associated factors (PAFs), such as TADA2L/ADA2, TADA3L/ADA3 and SPT3. Component of the STAGA transcription coactivator-HAT complex, at least composed of SUPT3H, GCN5L2, TAF5L, TAF6L, SUPT7L, TADA3L, TAD1L, TAF10, TAF12, TRRAP and TAF9.

The protein localises to the nucleus. Its function is as follows. Functions as a component of the PCAF complex. The PCAF complex is capable of efficiently acetylating histones in a nucleosomal context. The PCAF complex could be considered as the human version of the yeast SAGA complex. With TAF6L, acts as an epigenetic regulator essential for somatic reprogramming. Regulates target genes through H3K9ac deposition and MYC recruitment which trigger MYC regulatory network to orchestrate gene expression programs to control embryonic stem cell state. The sequence is that of TAF5-like RNA polymerase II p300/CBP-associated factor-associated factor 65 kDa subunit 5L from Mus musculus (Mouse).